The chain runs to 269 residues: Formamidopyrimidine-DNA glycosylase (269 aa).

Catalysis depends on P2, which acts as the Schiff-base intermediate with DNA. The active-site Proton donor is E3. K57 acts as the Proton donor; for beta-elimination activity in catalysis. DNA is bound by residues H90, R109, and K150. Residues 235 to 269 form an FPG-type zinc finger; the sequence is QVYGKAGEPCPECGEAIQEQKIGQRNTFYCSYCQC. Residue R259 is the Proton donor; for delta-elimination activity of the active site.

This sequence belongs to the FPG family. Monomer. It depends on Zn(2+) as a cofactor.

The catalysed reaction is Hydrolysis of DNA containing ring-opened 7-methylguanine residues, releasing 2,6-diamino-4-hydroxy-5-(N-methyl)formamidopyrimidine.. It carries out the reaction 2'-deoxyribonucleotide-(2'-deoxyribose 5'-phosphate)-2'-deoxyribonucleotide-DNA = a 3'-end 2'-deoxyribonucleotide-(2,3-dehydro-2,3-deoxyribose 5'-phosphate)-DNA + a 5'-end 5'-phospho-2'-deoxyribonucleoside-DNA + H(+). In terms of biological role, involved in base excision repair of DNA damaged by oxidation or by mutagenic agents. Acts as a DNA glycosylase that recognizes and removes damaged bases. Has a preference for oxidized purines, such as 7,8-dihydro-8-oxoguanine (8-oxoG). Has AP (apurinic/apyrimidinic) lyase activity and introduces nicks in the DNA strand. Cleaves the DNA backbone by beta-delta elimination to generate a single-strand break at the site of the removed base with both 3'- and 5'-phosphates. The protein is Formamidopyrimidine-DNA glycosylase of Vibrio vulnificus (strain CMCP6).